The sequence spans 80 residues: Translation initiation factor IF-1, chloroplastic (80 aa).

An S1-like domain is found at 1 to 74 (MKEQKWIHEG…TRGRIIYRLR (74 aa)).

This sequence belongs to the IF-1 family. In terms of assembly, component of the 30S ribosomal translation pre-initiation complex which assembles on the 30S ribosome in the order IF-2 and IF-3, IF-1 and N-formylmethionyl-tRNA(fMet); mRNA recruitment can occur at any time during PIC assembly.

It localises to the plastid. The protein resides in the chloroplast. Functionally, one of the essential components for the initiation of protein synthesis. Stabilizes the binding of IF-2 and IF-3 on the 30S subunit to which N-formylmethionyl-tRNA(fMet) subsequently binds. Helps modulate mRNA selection, yielding the 30S pre-initiation complex (PIC). Upon addition of the 50S ribosomal subunit IF-1, IF-2 and IF-3 are released leaving the mature 70S translation initiation complex. This Illicium oligandrum (Star anise) protein is Translation initiation factor IF-1, chloroplastic.